The primary structure comprises 343 residues: UDP-3-O-acylglucosamine N-acyltransferase (343 aa).

H238 (proton acceptor) is an active-site residue.

The protein belongs to the transferase hexapeptide repeat family. LpxD subfamily. In terms of assembly, homotrimer.

It catalyses the reaction a UDP-3-O-[(3R)-3-hydroxyacyl]-alpha-D-glucosamine + a (3R)-hydroxyacyl-[ACP] = a UDP-2-N,3-O-bis[(3R)-3-hydroxyacyl]-alpha-D-glucosamine + holo-[ACP] + H(+). The protein operates within bacterial outer membrane biogenesis; LPS lipid A biosynthesis. In terms of biological role, catalyzes the N-acylation of UDP-3-O-acylglucosamine using 3-hydroxyacyl-ACP as the acyl donor. Is involved in the biosynthesis of lipid A, a phosphorylated glycolipid that anchors the lipopolysaccharide to the outer membrane of the cell. This Marinomonas sp. (strain MWYL1) protein is UDP-3-O-acylglucosamine N-acyltransferase.